We begin with the raw amino-acid sequence, 257 residues long: Cilia- and flagella-associated protein 300 (257 aa).

Belongs to the CFAP300 family.

It is found in the cytoplasm. The protein localises to the cytoskeleton. The protein resides in the flagellum axoneme. Cilium- and flagellum-specific protein that plays a role in axonemal structure organization and motility. Plays a role in outer and inner dynein arm assembly. This is Cilia- and flagella-associated protein 300 from Chlamydomonas reinhardtii (Chlamydomonas smithii).